The sequence spans 510 residues: MALLSVLPVSLWLIAAGTFAVYHAIRAVYLIFFSPLAVFPGSPWAALGEYWEAYWNIGVKPGRKGQMLFKLEEMHKRLGPALRMGPNEVHIYDPAFYHELYRPGSRYYKDPSMHKVLGAPSSTLAESDPVRHKQRKAPLEPLFSKKNILSLEPMLMEHVDRCSQRFDELFAQGKPVSMEWALKSLAMDMVSQFAFGQSLNALADPEFKSLPVRVFQQYLPSLHVIKAFPFVRLLNSLPLWIAKRISHSVEMGHELEQFAARRIDEYMAAAAAGKTPTFPTLMERLLIPIPEKGYAVPDKQGLRDELLTVISAGDDTTGIANTVTLFNIFNNREVHDRLLAELKTVMPTPNSHVSYLQLEALPYLTAVIKEGLRYSSPAASRTPRLVPPGGVRLPDGRFIPAGTRVGMAIYHIHYNETLFESPRVFDPERWLQGPEVTAERAKFLVPFSRGSRSCLGINLAYMEMYMAIAYIVRRFDLDLVGTTEEDMKWDDMVVPQFHGEFMALTKRRED.

The chain crosses the membrane as a helical span at residues 7 to 29 (LPVSLWLIAAGTFAVYHAIRAVY). C454 contributes to the heme binding site.

The protein belongs to the cytochrome P450 family. Heme is required as a cofactor.

It localises to the membrane. It functions in the pathway secondary metabolite biosynthesis; terpenoid biosynthesis. Its function is as follows. Cytochrome P450 monooxygenase; part of the gene cluster that mediates the biosynthesis of macrophorins, isoprenoid epoxycyclohexenones containing cyclized drimane moieties. The first step of the pathway is the synthesis of 6-methylsalicylic acid (6-MSA) by the polyketide synthase macA. 6-MSA is then converted to m-cresol by the decarboxylase macB. The cytochrome P450 monooxygenase macC then catalyzes the oxidation of m-cresol to toluquinol. Epoxidation of toluquinol is then performed by the short chain dehydrogenase macD, with the help of macE, and a further prenylation by macG leads to 7-deacetoxyyanuthone A. The next step is the hydroxylation of C-22 of 7-deacetoxyyanuthone A by the cytochrome P450 monooxygenase macH to yield 22-deacetylyanuthone A. O-Mevalon transferase macI then attaches mevalon to the hydroxyl group of 22-deacetylyanuthone A to produce yanuthone E. The terpene cyclase macJ catalyzes the cyclization of 22-deacetylyanuthone A to macrophorin A. MacJ is also able to catalyze cyclization of yanuthone E and 7-deacetoxyyanuthone A to their corresponding macrophorins. The macJ products can be further modified by macH and macJ, as well as by the FAD-dependent monooxygenase macF, to produce additional macrophorins, including 4'-oxomacrophorin A, 4'-oxomacrophorin D and 4'-oxomacrophorin E. This chain is Cytochrome P450 monooxygenase macH, found in Penicillium terrestre.